A 555-amino-acid polypeptide reads, in one-letter code: Formate--tetrahydrofolate ligase (555 aa).

65–72 serves as a coordination point for ATP; the sequence is TPAGEGKS.

The protein belongs to the formate--tetrahydrofolate ligase family.

The catalysed reaction is (6S)-5,6,7,8-tetrahydrofolate + formate + ATP = (6R)-10-formyltetrahydrofolate + ADP + phosphate. Its pathway is one-carbon metabolism; tetrahydrofolate interconversion. This Staphylococcus epidermidis (strain ATCC 35984 / DSM 28319 / BCRC 17069 / CCUG 31568 / BM 3577 / RP62A) protein is Formate--tetrahydrofolate ligase.